The sequence spans 38 residues: Photosystem I reaction center subunit IX (38 aa).

The helical transmembrane segment at 6–26 (YLSTAPVVATLWLFLTAGILI) threads the bilayer.

Belongs to the PsaJ family.

The protein resides in the plastid. Its subcellular location is the chloroplast thylakoid membrane. Its function is as follows. May help in the organization of the PsaE and PsaF subunits. The protein is Photosystem I reaction center subunit IX of Cyanidioschyzon merolae (strain NIES-3377 / 10D) (Unicellular red alga).